We begin with the raw amino-acid sequence, 1345 residues long: DNA-directed RNA polymerase subunit beta' (1345 aa).

Positions 60, 62, 75, and 78 each coordinate Zn(2+). Mg(2+)-binding residues include D536, D538, and D540. Zn(2+) contacts are provided by C895, C974, C981, and C984.

It belongs to the RNA polymerase beta' chain family. In terms of assembly, the RNAP catalytic core consists of 2 alpha, 1 beta, 1 beta' and 1 omega subunit. When a sigma factor is associated with the core the holoenzyme is formed, which can initiate transcription. Requires Mg(2+) as cofactor. Zn(2+) is required as a cofactor.

It carries out the reaction RNA(n) + a ribonucleoside 5'-triphosphate = RNA(n+1) + diphosphate. Its function is as follows. DNA-dependent RNA polymerase catalyzes the transcription of DNA into RNA using the four ribonucleoside triphosphates as substrates. In Bifidobacterium longum (strain DJO10A), this protein is DNA-directed RNA polymerase subunit beta'.